A 698-amino-acid polypeptide reads, in one-letter code: uncharacterized protein (698 aa).

The N-terminal stretch at 1–17 (MKKRHLLSLLALGISTA) is a signal peptide. Residue Cys-18 is the site of N-palmitoyl cysteine attachment. Cys-18 carries S-diacylglycerol cysteine lipidation.

To E.coli YmcA.

The protein localises to the cell membrane. This is an uncharacterized protein from Escherichia coli (strain K12).